The primary structure comprises 123 residues: MSLRIRLKKLGSKKRPYYRIVVQDAREPRDGRAIEELGIYQPIAPKGTEVSFRLDRARFWLERGAQPSDTVRRLLQSRRGSVLNAVASDERRVASSQQAADLAHVESVSCAAPIPSSPGGQGV.

It belongs to the bacterial ribosomal protein bS16 family.

This Treponema pallidum (strain Nichols) protein is Small ribosomal subunit protein bS16.